Reading from the N-terminus, the 219-residue chain is N-(5'-phosphoribosyl)anthranilate isomerase (219 aa).

It belongs to the TrpF family.

It carries out the reaction N-(5-phospho-beta-D-ribosyl)anthranilate = 1-(2-carboxyphenylamino)-1-deoxy-D-ribulose 5-phosphate. Its pathway is amino-acid biosynthesis; L-tryptophan biosynthesis; L-tryptophan from chorismate: step 3/5. The chain is N-(5'-phosphoribosyl)anthranilate isomerase from Dehalococcoides mccartyi (strain ATCC BAA-2266 / KCTC 15142 / 195) (Dehalococcoides ethenogenes (strain 195)).